The primary structure comprises 465 residues: Ribosomal oxygenase 2 (465 aa).

Positions 139–271 (QPQRFKDELW…NSWGDFLLDT (133 aa)) constitute a JmjC domain. 3 residues coordinate Fe cation: His-179, Asp-181, and His-240. The residue at position 309 (Ser-309) is a Phosphoserine.

Belongs to the ROX family. MINA53 subfamily. Fe(2+) is required as a cofactor.

Its subcellular location is the nucleus. It localises to the nucleolus. The enzyme catalyses L-histidyl-[ribosomal protein uL15] + 2-oxoglutarate + O2 = (3S)-3-hydroxy-L-histidyl-[ribosomal protein uL15] + succinate + CO2. It carries out the reaction L-histidyl-[protein] + 2-oxoglutarate + O2 = (3S)-3-hydroxy-L-histidyl-[protein] + succinate + CO2. Oxygenase that can act as both a histone lysine demethylase and a ribosomal histidine hydroxylase. Is involved in the demethylation of trimethylated 'Lys-9' on histone H3 (H3K9me3), leading to an increase in ribosomal RNA expression. Also catalyzes the hydroxylation of 60S ribosomal protein L27a on 'His-39'. May play an important role in cell growth and survival. May be involved in ribosome biogenesis, most likely during the assembly process of pre-ribosomal particles. The protein is Ribosomal oxygenase 2 (RIOX2) of Pongo abelii (Sumatran orangutan).